Reading from the N-terminus, the 513-residue chain is 2-isopropylmalate synthase (513 aa).

One can recognise a Pyruvate carboxyltransferase domain in the interval 5–268; the sequence is LIIFDTTLRD…DVGVDTSQIV (264 aa). Positions 14, 202, 204, and 239 each coordinate Mn(2+). The segment at 394–513 is regulatory domain; that stretch reads RFISLSQRSE…KAVQKINPQI (120 aa).

This sequence belongs to the alpha-IPM synthase/homocitrate synthase family. LeuA type 1 subfamily. As to quaternary structure, homodimer. Mn(2+) is required as a cofactor.

The protein resides in the cytoplasm. It catalyses the reaction 3-methyl-2-oxobutanoate + acetyl-CoA + H2O = (2S)-2-isopropylmalate + CoA + H(+). It functions in the pathway amino-acid biosynthesis; L-leucine biosynthesis; L-leucine from 3-methyl-2-oxobutanoate: step 1/4. Catalyzes the condensation of the acetyl group of acetyl-CoA with 3-methyl-2-oxobutanoate (2-ketoisovalerate) to form 3-carboxy-3-hydroxy-4-methylpentanoate (2-isopropylmalate). This Cupriavidus pinatubonensis (strain JMP 134 / LMG 1197) (Cupriavidus necator (strain JMP 134)) protein is 2-isopropylmalate synthase.